We begin with the raw amino-acid sequence, 141 residues long: Large ribosomal subunit protein uL22 (141 aa).

Residues 110–141 (EEKKTVAKKTTTTKAPAKKTTSTKKATVKKES) form a disordered region. The segment covering 117–134 (KKTTTTKAPAKKTTSTKK) has biased composition (low complexity).

The protein belongs to the universal ribosomal protein uL22 family. Part of the 50S ribosomal subunit.

In terms of biological role, this protein binds specifically to 23S rRNA; its binding is stimulated by other ribosomal proteins, e.g. L4, L17, and L20. It is important during the early stages of 50S assembly. It makes multiple contacts with different domains of the 23S rRNA in the assembled 50S subunit and ribosome. The globular domain of the protein is located near the polypeptide exit tunnel on the outside of the subunit, while an extended beta-hairpin is found that lines the wall of the exit tunnel in the center of the 70S ribosome. The protein is Large ribosomal subunit protein uL22 of Campylobacter jejuni (strain RM1221).